Consider the following 315-residue polypeptide: ATP synthase gamma chain (315 aa).

It belongs to the ATPase gamma chain family. In terms of assembly, F-type ATPases have 2 components, CF(1) - the catalytic core - and CF(0) - the membrane proton channel. CF(1) has five subunits: alpha(3), beta(3), gamma(1), delta(1), epsilon(1). CF(0) has three main subunits: a, b and c.

It is found in the cellular thylakoid membrane. Functionally, produces ATP from ADP in the presence of a proton gradient across the membrane. The gamma chain is believed to be important in regulating ATPase activity and the flow of protons through the CF(0) complex. In Cyanothece sp. (strain PCC 7425 / ATCC 29141), this protein is ATP synthase gamma chain.